The chain runs to 447 residues: 23S rRNA (uracil(1939)-C(5))-methyltransferase RlmD (447 aa).

A TRAM domain is found at 7 to 66 (RKPLSQEPQKASIEALTHEGRGIAHVAGKTVFIDGALPGETVWFHYLRRRGKFDEGRVLE). Residues Cys-79, Cys-85, Cys-88, and Cys-168 each coordinate [4Fe-4S] cluster. Residues Gln-275, Phe-304, Asn-309, Glu-325, Asp-352, and Asp-374 each contribute to the S-adenosyl-L-methionine site. The active-site Nucleophile is the Cys-400.

This sequence belongs to the class I-like SAM-binding methyltransferase superfamily. RNA M5U methyltransferase family. RlmD subfamily.

The catalysed reaction is uridine(1939) in 23S rRNA + S-adenosyl-L-methionine = 5-methyluridine(1939) in 23S rRNA + S-adenosyl-L-homocysteine + H(+). Catalyzes the formation of 5-methyl-uridine at position 1939 (m5U1939) in 23S rRNA. The chain is 23S rRNA (uracil(1939)-C(5))-methyltransferase RlmD from Nitrosococcus oceani (strain ATCC 19707 / BCRC 17464 / JCM 30415 / NCIMB 11848 / C-107).